A 2281-amino-acid polypeptide reads, in one-letter code: Retinal-specific phospholipid-transporting ATPase ABCA4 (2281 aa).

Topologically, residues M1–R24 are cytoplasmic. The chain crosses the membrane as a helical span at residues F25–V45. Residues N46 to S646 are Extracellular-facing. 2 disulfides stabilise this stretch: C54-C81 and C75-C324. An N-linked (GlcNAc...) asparagine glycan is attached at N98. Mg(2+) contacts are provided by S336 and N338. Cysteines 370 and 519 form a disulfide. N415 and N504 each carry an N-linked (Hex...) asparagine glycan. Residues R587 and R653 each coordinate an N-all-trans-retinylidenephosphatidylethanolamine. 3 disulfides stabilise this stretch: C641-C1488, C1442-C1453, and C1486-C1500. A helical membrane pass occupies residues F647–V667. The Cytoplasmic portion of the chain corresponds to S668–T699. The helical transmembrane segment at W700–M720 threads the bilayer. Topologically, residues H721 to P730 are extracellular. The chain crosses the membrane as a helical span at residues F731–L751. The Cytoplasmic portion of the chain corresponds to S752–S759. Residues L760–F780 traverse the membrane as a helical segment. The Extracellular portion of the chain corresponds to A781–S835. Residues F836–Y856 form a helical membrane-spanning segment. The Cytoplasmic portion of the chain corresponds to L857 to Q1374. Position 901 is a phosphothreonine (T901). The ABC transporter 1 domain maps to V929–V1160. 3 residues coordinate ATP: F938, G966, and K969. T970 is a Mg(2+) binding site. Positions 971, 1010, 1054, 1064, 1065, and 1118 each coordinate ATP. Residue S1185 is modified to Phosphoserine. Positions E1295 to S1340 are disordered. The segment covering A1310–S1319 has biased composition (polar residues). Phosphothreonine is present on T1313. Phosphoserine occurs at positions 1317 and 1319. A helical membrane pass occupies residues I1375–F1395. Over G1396–V1679 the chain is Extracellular. N-linked (Hex...) asparagine glycosylation is present at N1455. An N-linked (Hex...) asparagine glycan is attached at N1527. The N-linked (GlcNAc...) asparagine glycan is linked to N1586. N1660 is a glycosylation site (N-linked (Hex...) asparagine). The chain crosses the membrane as a helical span at residues V1680–I1700. Over Q1701–N1725 the chain is Cytoplasmic. A helical membrane pass occupies residues F1726–G1746. At F1747 to N1757 the chain is on the extracellular side. Residues L1758–P1778 traverse the membrane as a helical segment. Residues A1779 to Y1790 are Cytoplasmic-facing. Residues V1791–L1811 form a helical membrane-spanning segment. The Extracellular portion of the chain corresponds to E1812–K1829. N-linked (GlcNAc...) asparagine glycosylation is present at N1817. Residues L1830–Q1850 form a helical membrane-spanning segment. Residues A1851 to A1879 are Cytoplasmic-facing. A helical membrane pass occupies residues M1880 to F1900. Topologically, residues S1901 to G2281 are extracellular. N1931 carries an N-linked (GlcNAc...) asparagine glycan. An ABC transporter 2 domain is found at L1936–K2168. Residues N1972, G1973, K1976, T1977, and T1978 each contribute to the ATP site. T1977 serves as a coordination point for Mg(2+). N-linked (GlcNAc...) asparagine glycans are attached at residues N2004 and N2050. G2071 provides a ligand contact to ATP. The tract at residues V2242–A2247 is essential for ATP binding and ATPase activity. N-linked (GlcNAc...) asparagine glycosylation is present at N2251. Residues A2262–G2281 form a disordered region.

N-glycosylated. Post-translationally, proteolytic cleavage by trypsin leads to a 120-kDa N-terminal fragment and a 115-kDa C-terminal fragment that are linked through disulfide bonds. In terms of processing, phosphorylation is independent of light exposure and modulates ATPase activity. Expressed in retina namely in the periphery and incisures of the rod outer segments (ROS).

The protein resides in the membrane. It localises to the cell projection. Its subcellular location is the cilium. The protein localises to the photoreceptor outer segment. It is found in the cytoplasmic vesicle. The protein resides in the endoplasmic reticulum. The enzyme catalyses ATP + H2O + phospholipidSide 1 = ADP + phosphate + phospholipidSide 2.. The catalysed reaction is an N-all-trans-retinylidenephosphatidylethanolamine(out) + ATP + H2O = an N-all-trans-retinylidenephosphatidylethanolamine(in) + ADP + phosphate + H(+). It carries out the reaction a 1,2-diacyl-sn-glycero-3-phosphoethanolamine(out) + ATP + H2O = a 1,2-diacyl-sn-glycero-3-phosphoethanolamine(in) + ADP + phosphate + H(+). It catalyses the reaction N-11-cis-retinylidenephosphatidylethanolamine(out) + ATP + H2O = N-11-cis-retinylidenephosphatidylethanolamine(in) + ADP + phosphate + H(+). The enzyme catalyses ATP + H2O = ADP + phosphate + H(+). With respect to regulation, all-trans-retinal transport activity is reduced by EDTA chelation of Mg2+. All-trans-retinal transport activity is inhibited by N-ethylmaleimide (NEM). Phosphatidylethanolamine transport is strongly inhibited by beryllium fluoride and NEM. Its function is as follows. Flippase that catalyzes in an ATP-dependent manner the transport of retinal-phosphatidylethanolamine conjugates like the 11-cis and all-trans isomers of N-retinylidene-phosphatidylethanolamine from the lumen to the cytoplasmic leaflet of photoreceptor outer segment disk membranes, where N-cis-retinylidene-phosphatidylethanolamine (N-cis-R-PE) is then isomerized to its all-trans isomer (N-trans-R-PE) and reduced by RDH8 to produce all-trans-retinol (all-trans-rol) and therefore prevents the accumulation of excess of 11-cis-retinal and its schiff-base conjugate and the formation of toxic bisretinoid. Displays both ATPase and GTPase activity that is strongly influenced by the lipid environment and the presence of retinoid compounds. Binds the unprotonated form of N-retinylidene-phosphatidylethanolamine with high affinity in the absence of ATP and ATP binding and hydrolysis induce a protein conformational change that causes the dissociation of N-retinylidene-phosphatidylethanolamine. This Bos taurus (Bovine) protein is Retinal-specific phospholipid-transporting ATPase ABCA4.